A 2352-amino-acid chain; its full sequence is Highly reducing polyketide synthase ZEA2 (2352 aa).

The region spanning 9-433 is the Ketosynthase family 3 (KS3) domain; that stretch reads PGPVAIVGLA…GTNGHVVLEA (425 aa). Catalysis depends on for beta-ketoacyl synthase activity residues Cys-181, His-316, and His-356. Positions 544–875 are malonyl-CoA:ACP transacylase (MAT) domain; it reads FVFTGQGAQW…LATSLFLQGV (332 aa). Ser-634 acts as the For malonyltransferase activity in catalysis. The N-terminal hotdog fold stretch occupies residues 923 to 1058; the sequence is RSIIGAPVPK…GLITIDYEGN (136 aa). Residues 923–1242 form the PKS/mFAS DH domain; the sequence is RSIIGAPVPK…TSELEMDGAA (320 aa). The segment at 925-1237 is dehydratase (DH) domain; the sequence is IIGAPVPKMN…VIDFRTSELE (313 aa). The active-site Proton acceptor; for dehydratase activity is the His-955. A C-terminal hotdog fold region spans residues 1086-1242; it reads PATYAKDRFY…TSELEMDGAA (157 aa). Residue Asp-1152 is the Proton donor; for dehydratase activity of the active site. An enoylreductase (ER) domain region spans residues 1643-1955; it reads GLLDTLYFVD…QGKHRGKIVL (313 aa). The catalytic ketoreductase (KRc) domain stretch occupies residues 1979–2159; it reads ATYLFVGGLG…VSVNLGIMRD (181 aa). The Carrier domain maps to 2269–2346; the sequence is KATEIITNAL…SFAGKLASTS (78 aa). An O-(pantetheine 4'-phosphoryl)serine modification is found at Ser-2306.

It participates in mycotoxin biosynthesis. Its function is as follows. Highly reducing polyketide synthase; part of the gene cluster that mediates the biosynthesis of zearalenone (ZEA), a nonsteroid estrogen that is a contaminant of cereal grains and causes estrogenic disorders in humans and animals. The ZEA backbone is synthesized from a single acetyl-CoA molecule and eight malonyl-CoA molecules. The reducing polyketide synthase ZEA2 is proposed to synthesize a reduced hexaketide intermediate by using different combinations of its reductive domains during each round of condensation. The hexaketide thioester is then transacylated to the non-reducing polyketide synthase ZEA1 and is further condensed with three malonyl-CoAs without reductive tailoring to yield a mixed reduced/unreduced nonaketide. ZEA1 must be able to interact with ZEA2 to facilitate starter-unit acyltransfer and initiate polyketide biosynthesis. ZEA1 also mediates the required C2-C7 cyclization to form the resorcylate core and catalyzes the formation of the macrolactone. ZEB1 is then responsible for the chemical conversion of beta-zearalenonol (beta-ZOL) to ZEA in the biosynthetic pathway. This Gibberella zeae (strain ATCC MYA-4620 / CBS 123657 / FGSC 9075 / NRRL 31084 / PH-1) (Wheat head blight fungus) protein is Highly reducing polyketide synthase ZEA2.